The chain runs to 305 residues: Tyrosine recombinase XerC (305 aa).

The Core-binding (CB) domain occupies 2 to 88 (TNKQRLVHLF…ALRSFYKFLL (87 aa)). Residues 109–295 (RIPSFLYEEE…SKDSLRKTYM (187 aa)) enclose the Tyr recombinase domain. Residues Arg-149, Lys-173, His-247, Arg-250, and His-273 contribute to the active site. Tyr-282 (O-(3'-phospho-DNA)-tyrosine intermediate) is an active-site residue.

The protein belongs to the 'phage' integrase family. XerC subfamily. Forms a cyclic heterotetrameric complex composed of two molecules of XerC and two molecules of XerD.

It localises to the cytoplasm. Its function is as follows. Site-specific tyrosine recombinase, which acts by catalyzing the cutting and rejoining of the recombining DNA molecules. The XerC-XerD complex is essential to convert dimers of the bacterial chromosome into monomers to permit their segregation at cell division. It also contributes to the segregational stability of plasmids. This chain is Tyrosine recombinase XerC, found in Bacillus pumilus (strain SAFR-032).